Consider the following 430-residue polypeptide: MISVYSISLGCPKNRVDTEHLLGSLGVAVQPVEHLSRADVVLINTCGFILPAVEESVRTIVETIDDLSGLRKRPLLAVAGCLVGRYGAKELASELPEVDVWLPNQDITAWPAMLAHALKLEGAVTPGRLLSTGPSYAWLKISDGCRHNCSFCTIPSIRGGHRSTPADVLEREARDLVAQGVRELVLVAQDVTAWGEDIGAPHGLATLLERLLPVPGLARLRLMYLYPAGLTRELLGFMRDAGAPLVPYFDVPLQHAHPDILSRMGRPFARDPRRVVERVRDFFPDAALRTSLIVGFPGETDEHYAALTSFVEETRFTHMGVFAYRAEEGTPAAEMPEQVEDRVKEWRRDALMEVQAEISEELLAVHEGTRQQVLVDAPHEEWPGLHTGRTWFQAPEIDGITYVSGPGVEPGALVEADIVETRTYDLVALV.

In terms of domain architecture, MTTase N-terminal spans 2 to 119 (ISVYSISLGC…WPAMLAHALK (118 aa)). Cys11, Cys46, Cys81, Cys145, Cys149, and Cys152 together coordinate [4Fe-4S] cluster. Residues 131–361 (STGPSYAWLK…MEVQAEISEE (231 aa)) form the Radical SAM core domain. The 67-residue stretch at 364–430 (AVHEGTRQQV…TRTYDLVALV (67 aa)) folds into the TRAM domain.

This sequence belongs to the methylthiotransferase family. RimO subfamily. Requires [4Fe-4S] cluster as cofactor.

It localises to the cytoplasm. The catalysed reaction is L-aspartate(89)-[ribosomal protein uS12]-hydrogen + (sulfur carrier)-SH + AH2 + 2 S-adenosyl-L-methionine = 3-methylsulfanyl-L-aspartate(89)-[ribosomal protein uS12]-hydrogen + (sulfur carrier)-H + 5'-deoxyadenosine + L-methionine + A + S-adenosyl-L-homocysteine + 2 H(+). Catalyzes the methylthiolation of an aspartic acid residue of ribosomal protein uS12. In Nitratidesulfovibrio vulgaris (strain DP4) (Desulfovibrio vulgaris), this protein is Ribosomal protein uS12 methylthiotransferase RimO.